The chain runs to 580 residues: L-aspartate oxidase (580 aa).

FAD is bound by residues S26–A29, K49, S56–G63, and D227. The active-site Proton donor/acceptor is R297. FAD contacts are provided by residues E382 and S398–L399. The segment at V556 to Q580 is disordered.

It belongs to the FAD-dependent oxidoreductase 2 family. NadB subfamily. Requires FAD as cofactor.

It is found in the cytoplasm. The enzyme catalyses L-aspartate + O2 = iminosuccinate + H2O2. The protein operates within cofactor biosynthesis; NAD(+) biosynthesis; iminoaspartate from L-aspartate (oxidase route): step 1/1. Functionally, catalyzes the oxidation of L-aspartate to iminoaspartate, the first step in the de novo biosynthesis of NAD(+). The protein is L-aspartate oxidase (nadB) of Streptomyces coelicolor (strain ATCC BAA-471 / A3(2) / M145).